Consider the following 457-residue polypeptide: Methylenetetrahydrofolate--tRNA-(uracil-5-)-methyltransferase TrmFO (457 aa).

12–17 (GGGLAG) serves as a coordination point for FAD.

The protein belongs to the MnmG family. TrmFO subfamily. FAD is required as a cofactor.

It is found in the cytoplasm. The enzyme catalyses uridine(54) in tRNA + (6R)-5,10-methylene-5,6,7,8-tetrahydrofolate + NADH + H(+) = 5-methyluridine(54) in tRNA + (6S)-5,6,7,8-tetrahydrofolate + NAD(+). It carries out the reaction uridine(54) in tRNA + (6R)-5,10-methylene-5,6,7,8-tetrahydrofolate + NADPH + H(+) = 5-methyluridine(54) in tRNA + (6S)-5,6,7,8-tetrahydrofolate + NADP(+). Functionally, catalyzes the folate-dependent formation of 5-methyl-uridine at position 54 (M-5-U54) in all tRNAs. The sequence is that of Methylenetetrahydrofolate--tRNA-(uracil-5-)-methyltransferase TrmFO from Myxococcus xanthus (strain DK1622).